The chain runs to 333 residues: Threonine-phosphate decarboxylase (333 aa).

N6-(pyridoxal phosphate)lysine is present on lysine 199.

The protein belongs to the class-I pyridoxal-phosphate-dependent aminotransferase family. In terms of assembly, homodimer. It depends on pyridoxal 5'-phosphate as a cofactor.

It is found in the cytoplasm. The catalysed reaction is O-phospho-L-threonine + H(+) = (R)-1-aminopropan-2-yl phosphate + CO2. It participates in cofactor biosynthesis; adenosylcobalamin biosynthesis. In terms of biological role, decarboxylates L-threonine-O-3-phosphate to yield (R)-1-amino-2-propanol O-2-phosphate, the precursor for the linkage between the nucleotide loop and the corrin ring in cobalamin. The sequence is that of Threonine-phosphate decarboxylase (cobC) from Sinorhizobium sp.